Consider the following 67-residue polypeptide: uncharacterized protein (67 aa).

The helical transmembrane segment at 4 to 24 (WIFAILMLGVAIVLSIIATFF) threads the bilayer.

The protein resides in the membrane. This is an uncharacterized protein from Bacillus anthracis.